Consider the following 484-residue polypeptide: uncharacterized protein (484 aa).

Positions 14–82 (VPLHRQIEQY…KGGGTKVVNS (69 aa)) constitute an HTH gntR-type domain. The H-T-H motif DNA-binding region spans 42 to 61 (QRTLADMFQVNRSTVTAAID). K327 is modified (N6-(pyridoxal phosphate)lysine).

In the C-terminal section; belongs to the class-I pyridoxal-phosphate-dependent aminotransferase family. Pyridoxal 5'-phosphate is required as a cofactor.

This is an uncharacterized protein from Bacillus subtilis (strain 168).